The following is a 439-amino-acid chain: MKKPLRWLAALTVLLLPLSALAQQQGLTIDIVGGSASATPIAVIPMPYQGSGTAPQTDVSAVVGADLDRSGQFRTLPAAQIVEKPTRGTEVQFQTWRTLKQNYIVVGRVMNAGEGAYRVEYELFDVAKGERMLGLAMTARANAMRDVSHQMADAIYEKITGVRGAFWTRIAYVTASGKGGAMRYALMVADSDGYNPQTIVRSAEPLLSPNWSPDGKKLAYVSFERGNSSIYLQDIATGARELVSSFRGINGAPSFSPDGRRLALALSRSGNPEIYVMDLGSKQLTQLTNHFGIDTEPTWAPDGGSIYFTSDRGGRPQIYQVAASGGSANRVTFQGNYNATASVSFDGKKIAVAQGSGNTYRIAMMDRSLGSPSWSTLSPGSLDESPSFAPNASMVLYAAREGGRGVLYAVSSDARVRQRLVLADGDVREPAWGPYRTAH.

The N-terminal stretch at 1–22 is a signal peptide; the sequence is MKKPLRWLAALTVLLLPLSALA.

It belongs to the TolB family. As to quaternary structure, the Tol-Pal system is composed of five core proteins: the inner membrane proteins TolA, TolQ and TolR, the periplasmic protein TolB and the outer membrane protein Pal. They form a network linking the inner and outer membranes and the peptidoglycan layer.

Its subcellular location is the periplasm. Functionally, part of the Tol-Pal system, which plays a role in outer membrane invagination during cell division and is important for maintaining outer membrane integrity. In Xanthomonas oryzae pv. oryzae (strain MAFF 311018), this protein is Tol-Pal system protein TolB.